Here is a 1049-residue protein sequence, read N- to C-terminus: Protein argonaute 12 (1049 aa).

The span at 1 to 53 shows a compositional bias: gly residues; the sequence is MSSRGGGGGGRRGGRGGGGGREGGGGGGGGGGRGGQGRGDLGVVGERQGGGRG. Disordered stretches follow at residues 1-101 and 144-192; these read MSSR…GVQV and GGAP…KAVT. The segment covering 54-65 has biased composition (basic and acidic residues); that stretch reads AGERGGRHDAPR. Gly residues predominate over residues 66-76; that stretch reads GRGGVAVGAGA. Residues 144 to 160 are compositionally biased toward low complexity; that stretch reads GGAPPAGQGSSLAAAQG. Residues 404 to 515 form the PAZ domain; the sequence is PVMDFAVQYL…LPMEVCSILE (112 aa). The Piwi domain maps to 694 to 1012; the sequence is LLIVILTEIS…GAFRARYYME (319 aa).

It belongs to the argonaute family. Ago subfamily.

Its function is as follows. Probably involved in the RNA silencing pathway. May bind to short RNAs such as microRNAs (miRNAs) or short interfering RNAs (siRNAs), and represses the translation of mRNAs which are complementary to them. In Oryza sativa subsp. japonica (Rice), this protein is Protein argonaute 12 (AGO12).